The sequence spans 298 residues: Protease HtpX (298 aa).

Transmembrane regions (helical) follow at residues 4 to 24 (IALYLLTNLAVIVVASITLSL) and 41 to 61 (TSLLIFSAVFGFAGSLISLLI). His-147 provides a ligand contact to Zn(2+). Residue Glu-148 is part of the active site. Zn(2+) is bound at residue His-151. Transmembrane regions (helical) follow at residues 162–182 (LIQGVVNTFVIFAARVVGYVI) and 193–213 (GLGFGYYIVVIVTEIIFGIAA). Residue Glu-225 participates in Zn(2+) binding.

This sequence belongs to the peptidase M48B family. Zn(2+) serves as cofactor.

It is found in the cell inner membrane. The polypeptide is Protease HtpX (Alcanivorax borkumensis (strain ATCC 700651 / DSM 11573 / NCIMB 13689 / SK2)).